The chain runs to 301 residues: Haloalkane dehalogenase (301 aa).

Aspartate 123 functions as the Nucleophile in the catalytic mechanism. Aspartate 250 (proton donor) is an active-site residue. Histidine 279 functions as the Proton acceptor in the catalytic mechanism.

The protein belongs to the haloalkane dehalogenase family. Type 1 subfamily. As to quaternary structure, monomer.

The enzyme catalyses 1-haloalkane + H2O = a halide anion + a primary alcohol + H(+). Catalyzes hydrolytic cleavage of carbon-halogen bonds in halogenated aliphatic compounds, leading to the formation of the corresponding primary alcohols, halide ions and protons. The sequence is that of Haloalkane dehalogenase from Phenylobacterium zucineum (strain HLK1).